A 266-amino-acid chain; its full sequence is Ribonuclease 3 (266 aa).

The 123-residue stretch at 8 to 130 folds into the RNase III domain; sequence LARLTKKLGY…IIGAVYLDSN (123 aa). Mg(2+) is bound at residue Glu-43. Residue Asp-47 is part of the active site. The Mg(2+) site is built by Asp-116 and Glu-119. Glu-119 is an active-site residue. One can recognise a DRBM domain in the interval 157–227; sequence DPKTRLQEFL…AQQILALIEK (71 aa). A disordered region spans residues 229–266; the sequence is REQEKEVKIKPTKQAKLANPRHTKSNPSSSSKKSSTRK. The span at 253-266 shows a compositional bias: low complexity; sequence SNPSSSSKKSSTRK.

This sequence belongs to the ribonuclease III family. Homodimer. It depends on Mg(2+) as a cofactor.

The protein localises to the cytoplasm. It carries out the reaction Endonucleolytic cleavage to 5'-phosphomonoester.. Functionally, digests double-stranded RNA. Involved in the processing of primary rRNA transcript to yield the immediate precursors to the large and small rRNAs (23S and 16S). Processes some mRNAs, and tRNAs when they are encoded in the rRNA operon. Processes pre-crRNA and tracrRNA of type II CRISPR loci if present in the organism. This is Ribonuclease 3 from Colwellia psychrerythraea (strain 34H / ATCC BAA-681) (Vibrio psychroerythus).